We begin with the raw amino-acid sequence, 839 residues long: Probable inorganic carbon transporter subunit DabA (839 aa).

Positions 353, 355, 537, and 552 each coordinate Zn(2+).

It belongs to the inorganic carbon transporter (TC 9.A.2) DabA family. As to quaternary structure, forms a complex with DabB. Requires Zn(2+) as cofactor.

The protein resides in the cell membrane. In terms of biological role, part of an energy-coupled inorganic carbon pump. This Chloroflexus aggregans (strain MD-66 / DSM 9485) protein is Probable inorganic carbon transporter subunit DabA.